Consider the following 645-residue polypeptide: Acetyl-coenzyme A synthetase (645 aa).

Residues 190-193 (RGGR) and Thr308 each bind CoA. Residues 384–386 (GEP), 408–413 (DTWWQT), Asp497, and Arg512 contribute to the ATP site. Residue Ser520 coordinates CoA. ATP is bound at residue Arg523. Val534, His536, and Val539 together coordinate Mg(2+). N6-acetyllysine is present on Lys606.

This sequence belongs to the ATP-dependent AMP-binding enzyme family. Mg(2+) serves as cofactor. Post-translationally, acetylated. Deacetylation by the SIR2-homolog deacetylase activates the enzyme.

The enzyme catalyses acetate + ATP + CoA = acetyl-CoA + AMP + diphosphate. Functionally, catalyzes the conversion of acetate into acetyl-CoA (AcCoA), an essential intermediate at the junction of anabolic and catabolic pathways. AcsA undergoes a two-step reaction. In the first half reaction, AcsA combines acetate with ATP to form acetyl-adenylate (AcAMP) intermediate. In the second half reaction, it can then transfer the acetyl group from AcAMP to the sulfhydryl group of CoA, forming the product AcCoA. This chain is Acetyl-coenzyme A synthetase, found in Alkalilimnicola ehrlichii (strain ATCC BAA-1101 / DSM 17681 / MLHE-1).